A 230-amino-acid chain; its full sequence is MYSIKMRSSNQDIHISGAETICEFDKIEQTVQRFYNKGFFHENGQPDFLNIKIQKIMEPIKQIKALQIIEDDKANLQHLTQKCGVTEQALNQGMTYIKNETVYTGAIILSAISGKRLDSFGHRGIRATHFSFEDINNKGDLNERVTDALAIASCINAHPYVKGELCVSDDLTYTTGYFASAKIGYHRLFDIKPVNTRYGGRIIFVDDRIDLNHYILFLESTPKQVVYETV.

This sequence belongs to the BioW family. As to quaternary structure, homodimer. Requires Mg(2+) as cofactor.

The enzyme catalyses heptanedioate + ATP + CoA = 6-carboxyhexanoyl-CoA + AMP + diphosphate. It participates in metabolic intermediate metabolism; pimeloyl-CoA biosynthesis; pimeloyl-CoA from pimelate: step 1/1. In terms of biological role, catalyzes the transformation of pimelate into pimeloyl-CoA with concomitant hydrolysis of ATP to AMP. This is 6-carboxyhexanoate--CoA ligase from Staphylococcus aureus (strain MRSA252).